The chain runs to 409 residues: Multifunctional CCA protein (409 aa).

Residues Gly-8 and Arg-11 each coordinate ATP. CTP-binding residues include Gly-8 and Arg-11. Mg(2+)-binding residues include Asp-21 and Asp-23. The ATP site is built by Arg-91, Arg-137, and Arg-140. 3 residues coordinate CTP: Arg-91, Arg-137, and Arg-140. Residues 228-329 (SGLHTLSVLE…LELLQSFDVY (102 aa)) form the HD domain.

It belongs to the tRNA nucleotidyltransferase/poly(A) polymerase family. Bacterial CCA-adding enzyme type 1 subfamily. Monomer. Can also form homodimers and oligomers. It depends on Mg(2+) as a cofactor. Ni(2+) serves as cofactor.

The enzyme catalyses a tRNA precursor + 2 CTP + ATP = a tRNA with a 3' CCA end + 3 diphosphate. It carries out the reaction a tRNA with a 3' CCA end + 2 CTP + ATP = a tRNA with a 3' CCACCA end + 3 diphosphate. In terms of biological role, catalyzes the addition and repair of the essential 3'-terminal CCA sequence in tRNAs without using a nucleic acid template. Adds these three nucleotides in the order of C, C, and A to the tRNA nucleotide-73, using CTP and ATP as substrates and producing inorganic pyrophosphate. tRNA 3'-terminal CCA addition is required both for tRNA processing and repair. Also involved in tRNA surveillance by mediating tandem CCA addition to generate a CCACCA at the 3' terminus of unstable tRNAs. While stable tRNAs receive only 3'-terminal CCA, unstable tRNAs are marked with CCACCA and rapidly degraded. This is Multifunctional CCA protein from Pseudomonas fluorescens (strain Pf0-1).